A 1224-amino-acid polypeptide reads, in one-letter code: Potassium channel subfamily T member 1 (1224 aa).

The segment at 1–37 is disordered; sequence MARAKLPRSPSEGKAGPGDTPAGAAAPEEPHGLSPLL. Topologically, residues 1–79 are cytoplasmic; sequence MARAKLPRSP…LFFIKNQRSS (79 aa). Low complexity predominate over residues 13-27; that stretch reads GKAGPGDTPAGAAAP. Residues 80 to 112 form a helical membrane-spanning segment; it reads LRIRLFNFSLKLLTCLLYIVRVLLDNPDQGIGC. Residues 113–139 are Extracellular-facing; that stretch reads WGCTKYNYTFNGSSSEFHWAPILWVER. Residues Asn119 and Asn123 are each glycosylated (N-linked (GlcNAc...) asparagine). A helical membrane pass occupies residues 140 to 164; sequence KMALWVIQVIVATISFLETMLIIYL. Residues 165–178 are Cytoplasmic-facing; that stretch reads SYKGNIWEQIFHVS. A helical transmembrane segment spans residues 179–194; it reads FVLEMINTLPFIITVF. The Extracellular portion of the chain corresponds to 195–201; it reads WPPLRNL. The helical transmembrane segment at 202–219 threads the bilayer; the sequence is FIPVFLNCWLAKHALENM. Topologically, residues 220–232 are cytoplasmic; the sequence is INDFHRAILRTQS. A helical transmembrane segment spans residues 233-260; it reads AMFNQVLILFCTLLCLVFTGTCGIQHLE. At 261–267 the chain is on the extracellular side; that stretch reads RAGGNLN. The pore-forming intramembrane region spans 268–288; it reads LLTSFYFCIVTFSTVGFGDVT. Residues Val282 and Gly283 each coordinate K(+). Residues 289 to 290 lie on the Extracellular side of the membrane; it reads PK. Residues 291–324 traverse the membrane as a helical segment; the sequence is IWPSQLLVVILICVTLVVLPLQFEELVYLWMERQ. Over 325–1224 the chain is Cytoplasmic; the sequence is KSGGNYSRHR…NPETRDETQL (900 aa). The region spanning 338–474 is the RCK N-terminal 1 domain; it reads EKHVVLCVSS…FHVKFADHVV (137 aa). Na(+) is bound by residues Leu499, His502, Ser524, and Asn526. Residues 644–675 are disordered; that stretch reads QNTDCRPSQGGSGGDGTKLTLPTENGSGSRRP. A compositionally biased stretch (polar residues) spans 663–673; it reads TLPTENGSGSR. The Zn(2+) site is built by Cys744 and Cys745. The K(+) site is built by Arg747 and Lys750. The Na(+) site is built by Arg747 and Lys750. 2 residues coordinate Zn(2+): Cys752 and His754. Residues Asn755, Tyr757, Tyr763, and Gly764 each coordinate K(+). Position 757 (Tyr757) interacts with Na(+). Phe765 serves as a coordination point for Na(+). Residues 767 to 907 enclose the RCK N-terminal 2 domain; it reads NKLIIVSAET…QFRAKDSYSL (141 aa). Positions 773, 804, 806, 828, and 851 each coordinate K(+). Disordered regions lie at residues 1038-1066 and 1198-1224; these read REAK…ADPV and SSSQ…ETQL. Composition is skewed to low complexity over residues 1045–1055 and 1198–1215; these read GTRAASGSGST and SSSQ…SSCN.

This sequence belongs to the potassium channel family. Calcium-activated (TC 1.A.1.3) subfamily. KCa4.1/KCNT1 sub-subfamily. As to quaternary structure, homotetramer; which constitutes the Na(+)-activated K(+) channel. Interacts with KCNT2; these heterodimer channels differ from the homomers in their unitary conductance, kinetic behavior, subcellular localization, and response to activation of protein kinase C. Interacts (via C-terminus) with FMR1; this interaction alters gating properties of KCNT1. Interacts with CRBN via its cytoplasmic C-terminus. Phosphorylated by protein kinase C. Phosphorylation of the C-terminal domain increases channel activity. As to expression, enriched in the brainstem and olfactory bulb and detected at significant levels in four different brain regions.

It is found in the cell membrane. The catalysed reaction is K(+)(in) = K(+)(out). Activated by high intracellular Na(+). In addition to activation by Na(+), is cooperatively activated by intracellular Cl(-) levels. Inhibited by Zn(2+). Activated upon stimulation of G-protein coupled receptors, such as CHRM1 and GRIA1. Sodium-activated K(+) channel. Acts as an important mediator of neuronal membrane excitability. Contributes to the delayed outward currents. Regulates neuronal bursting in sensory neurons. Contributes to synaptic development and plasticity. This Mus musculus (Mouse) protein is Potassium channel subfamily T member 1 (Kcnt1).